Consider the following 251-residue polypeptide: Carbohydrate deacetylase (251 aa).

2 residues coordinate Mg(2+): H59 and H122.

This sequence belongs to the YdjC deacetylase family. Homodimer. The cofactor is Mg(2+).

In terms of biological role, probably catalyzes the deacetylation of acetylated carbohydrates an important step in the degradation of oligosaccharides. This Vibrio campbellii (strain ATCC BAA-1116) protein is Carbohydrate deacetylase.